Here is a 484-residue protein sequence, read N- to C-terminus: Glutamate--tRNA ligase (484 aa).

The short motif at 12 to 22 (PSPTGEPHVGT) is the 'HIGH' region element. The 'KMSKS' region signature appears at 253-257 (KLSKR). Position 256 (Lys256) interacts with ATP.

This sequence belongs to the class-I aminoacyl-tRNA synthetase family. Glutamate--tRNA ligase type 1 subfamily. In terms of assembly, monomer.

The protein localises to the cytoplasm. It catalyses the reaction tRNA(Glu) + L-glutamate + ATP = L-glutamyl-tRNA(Glu) + AMP + diphosphate. Catalyzes the attachment of glutamate to tRNA(Glu) in a two-step reaction: glutamate is first activated by ATP to form Glu-AMP and then transferred to the acceptor end of tRNA(Glu). The polypeptide is Glutamate--tRNA ligase (Rhizobium leguminosarum bv. trifolii (strain WSM2304)).